A 283-amino-acid polypeptide reads, in one-letter code: Release factor glutamine methyltransferase (283 aa).

Residues 120–124, aspartate 143, phenylalanine 172, and asparagine 187 contribute to the S-adenosyl-L-methionine site; that span reads GTGSG. 187-190 lines the substrate pocket; it reads NPPY.

It belongs to the protein N5-glutamine methyltransferase family. PrmC subfamily.

The enzyme catalyses L-glutaminyl-[peptide chain release factor] + S-adenosyl-L-methionine = N(5)-methyl-L-glutaminyl-[peptide chain release factor] + S-adenosyl-L-homocysteine + H(+). In terms of biological role, methylates the class 1 translation termination release factors RF1/PrfA and RF2/PrfB on the glutamine residue of the universally conserved GGQ motif. The polypeptide is Release factor glutamine methyltransferase (Moorella thermoacetica (strain ATCC 39073 / JCM 9320)).